The chain runs to 431 residues: 4-hydroxy-3-methylbut-2-en-1-yl diphosphate synthase (flavodoxin) (431 aa).

The segment at Met-1 to Thr-21 is disordered. [4Fe-4S] cluster is bound by residues Cys-310, Cys-313, Cys-356, and Glu-363.

It belongs to the IspG family. [4Fe-4S] cluster is required as a cofactor.

It carries out the reaction (2E)-4-hydroxy-3-methylbut-2-enyl diphosphate + oxidized [flavodoxin] + H2O + 2 H(+) = 2-C-methyl-D-erythritol 2,4-cyclic diphosphate + reduced [flavodoxin]. Its pathway is isoprenoid biosynthesis; isopentenyl diphosphate biosynthesis via DXP pathway; isopentenyl diphosphate from 1-deoxy-D-xylulose 5-phosphate: step 5/6. Its function is as follows. Converts 2C-methyl-D-erythritol 2,4-cyclodiphosphate (ME-2,4cPP) into 1-hydroxy-2-methyl-2-(E)-butenyl 4-diphosphate. This chain is 4-hydroxy-3-methylbut-2-en-1-yl diphosphate synthase (flavodoxin), found in Nitrobacter hamburgensis (strain DSM 10229 / NCIMB 13809 / X14).